The sequence spans 119 residues: Beta-2-microglobulin (119 aa).

An N-terminal signal peptide occupies residues 1 to 20 (MARFVVVALLVQLSLFGLEA). The 90-residue stretch at 25-114 (PKIQVYSRYP…VTFSTPKTVK (90 aa)) folds into the Ig-like C1-type domain. A disulfide bridge connects residues cysteine 45 and cysteine 100.

It belongs to the beta-2-microglobulin family. Heterodimer of an alpha chain and a beta chain. Beta-2-microglobulin is the beta-chain of major histocompatibility complex class I molecules.

It localises to the secreted. Component of the class I major histocompatibility complex (MHC). Involved in the presentation of peptide antigens to the immune system. This is Beta-2-microglobulin (B2M) from Saguinus imperator (Emperor tamarin).